The chain runs to 188 residues: Trafficking protein particle complex subunit 5 (188 aa).

Belongs to the TRAPP small subunits family. BET3 subfamily. Part of the multisubunit TRAPP (transport protein particle) complex.

Its subcellular location is the golgi apparatus. The protein resides in the cis-Golgi network. It localises to the endoplasmic reticulum. Its function is as follows. May play a role in vesicular transport from endoplasmic reticulum to Golgi. The chain is Trafficking protein particle complex subunit 5 (TRAPPC5) from Gallus gallus (Chicken).